The following is a 227-amino-acid chain: Flagellar L-ring protein (227 aa).

A signal peptide spans 1-15; sequence MRTWAVLPILLMLVG. Cysteine 16 carries the N-palmitoyl cysteine lipid modification. Cysteine 16 carries the S-diacylglycerol cysteine lipid modification.

The protein belongs to the FlgH family. As to quaternary structure, the basal body constitutes a major portion of the flagellar organelle and consists of four rings (L,P,S, and M) mounted on a central rod.

The protein resides in the cell outer membrane. It is found in the bacterial flagellum basal body. Assembles around the rod to form the L-ring and probably protects the motor/basal body from shearing forces during rotation. This Syntrophotalea carbinolica (strain DSM 2380 / NBRC 103641 / GraBd1) (Pelobacter carbinolicus) protein is Flagellar L-ring protein.